The following is a 142-amino-acid chain: Large ribosomal subunit protein uL11 (142 aa).

This sequence belongs to the universal ribosomal protein uL11 family. In terms of assembly, part of the ribosomal stalk of the 50S ribosomal subunit. Interacts with L10 and the large rRNA to form the base of the stalk. L10 forms an elongated spine to which L12 dimers bind in a sequential fashion forming a multimeric L10(L12)X complex. Post-translationally, one or more lysine residues are methylated.

In terms of biological role, forms part of the ribosomal stalk which helps the ribosome interact with GTP-bound translation factors. This Desulfitobacterium hafniense (strain DSM 10664 / DCB-2) protein is Large ribosomal subunit protein uL11.